The following is a 167-amino-acid chain: Photosystem I assembly protein Ycf3 (167 aa).

3 TPR repeats span residues alanine 35–proline 68, serine 72–leucine 105, and glycine 120–asparagine 153.

It belongs to the Ycf3 family.

Its subcellular location is the plastid. It localises to the chloroplast thylakoid membrane. Its function is as follows. Essential for the assembly of the photosystem I (PSI) complex. May act as a chaperone-like factor to guide the assembly of the PSI subunits. The chain is Photosystem I assembly protein Ycf3 from Zygnema circumcarinatum (Green alga).